We begin with the raw amino-acid sequence, 505 residues long: ATP synthase subunit alpha (505 aa).

171–178 contributes to the ATP binding site; that stretch reads GDRQTGKT.

This sequence belongs to the ATPase alpha/beta chains family. In terms of assembly, F-type ATPases have 2 components, CF(1) - the catalytic core - and CF(0) - the membrane proton channel. CF(1) has five subunits: alpha(3), beta(3), gamma(1), delta(1), epsilon(1). CF(0) has three main subunits: a(1), b(2) and c(9-12). The alpha and beta chains form an alternating ring which encloses part of the gamma chain. CF(1) is attached to CF(0) by a central stalk formed by the gamma and epsilon chains, while a peripheral stalk is formed by the delta and b chains.

It localises to the cell inner membrane. It catalyses the reaction ATP + H2O + 4 H(+)(in) = ADP + phosphate + 5 H(+)(out). Produces ATP from ADP in the presence of a proton gradient across the membrane. The alpha chain is a regulatory subunit. This Campylobacter fetus subsp. fetus (strain 82-40) protein is ATP synthase subunit alpha.